A 141-amino-acid polypeptide reads, in one-letter code: Small ribosomal subunit protein bS6 (141 aa).

The interval 96 to 141 (VTGPSAMMKTVEREEFRKASQAGNQTTAPAASPADHAAAPASADRS) is disordered. Residues 123–141 (APAASPADHAAAPASADRS) show a composition bias toward low complexity.

This sequence belongs to the bacterial ribosomal protein bS6 family.

In terms of biological role, binds together with bS18 to 16S ribosomal RNA. The sequence is that of Small ribosomal subunit protein bS6 from Verminephrobacter eiseniae (strain EF01-2).